The following is a 101-amino-acid chain: UPF0213 protein VC0395_0675/VC395_A0575 (101 aa).

One can recognise a GIY-YIG domain in the interval 9–85; it reads SPWFVYLVRC…KALSKSQKEA (77 aa).

Belongs to the UPF0213 family.

The polypeptide is UPF0213 protein VC0395_0675/VC395_A0575 (Vibrio cholerae serotype O1 (strain ATCC 39541 / Classical Ogawa 395 / O395)).